A 45-amino-acid polypeptide reads, in one-letter code: Large ribosomal subunit protein bL36 (45 aa).

The interval 1–45 (MRVSSSIKADPSKGDKLVRRKGRLYVINKKDPNRKQRQAGPARKK) is disordered.

It belongs to the bacterial ribosomal protein bL36 family.

The polypeptide is Large ribosomal subunit protein bL36 (Chlamydia trachomatis serovar L2 (strain ATCC VR-902B / DSM 19102 / 434/Bu)).